The following is a 261-amino-acid chain: Cytochrome c oxidase subunit 3 (261 aa).

Topologically, residues 1–15 (MTHQTHAYHMVDPSP) are mitochondrial matrix. A helical membrane pass occupies residues 16 to 34 (WPLTGALSALLMTSGLTMW). Residues 35–40 (FHYHSV) lie on the Mitochondrial intermembrane side of the membrane. Residues 41–66 (TLLLLGLTTNILTMFQWWRDVVREGT) form a helical membrane-spanning segment. Topologically, residues 67–72 (FQGHHT) are mitochondrial matrix. A helical membrane pass occupies residues 73 to 105 (PVVQESLRYGMILFITSEVLFFTGFFWAFYHSS). At 106-128 (LAPTPELGSYWPPVGVYPLNPLE) the chain is on the mitochondrial intermembrane side. A helical membrane pass occupies residues 129 to 152 (VPLLNTSVLLASGVTITWAHHSLM). Residues 153-155 (EGN) are Mitochondrial matrix-facing. Residues 156-183 (RKNMLQALLITILLGVYFTLLQMFEYYE) traverse the membrane as a helical segment. Residues 184-190 (ASFTISD) are Mitochondrial intermembrane-facing. A helical membrane pass occupies residues 191-223 (GIYGSTFFVTTGFHGLHVIIGSTFLLTCFIRQL). The Mitochondrial matrix segment spans residues 224–232 (KFHFTSNHH). Residues 233–256 (FGFEAAAWYWHFVDVVWLFLYLSI) traverse the membrane as a helical segment. Over 257-261 (YWWGS) the chain is Mitochondrial intermembrane.

It belongs to the cytochrome c oxidase subunit 3 family. As to quaternary structure, component of the cytochrome c oxidase (complex IV, CIV), a multisubunit enzyme composed of 14 subunits. The complex is composed of a catalytic core of 3 subunits MT-CO1, MT-CO2 and MT-CO3, encoded in the mitochondrial DNA, and 11 supernumerary subunits COX4I, COX5A, COX5B, COX6A, COX6B, COX6C, COX7A, COX7B, COX7C, COX8 and NDUFA4, which are encoded in the nuclear genome. The complex exists as a monomer or a dimer and forms supercomplexes (SCs) in the inner mitochondrial membrane with NADH-ubiquinone oxidoreductase (complex I, CI) and ubiquinol-cytochrome c oxidoreductase (cytochrome b-c1 complex, complex III, CIII), resulting in different assemblies (supercomplex SCI(1)III(2)IV(1) and megacomplex MCI(2)III(2)IV(2)).

The protein localises to the mitochondrion inner membrane. It catalyses the reaction 4 Fe(II)-[cytochrome c] + O2 + 8 H(+)(in) = 4 Fe(III)-[cytochrome c] + 2 H2O + 4 H(+)(out). Its function is as follows. Component of the cytochrome c oxidase, the last enzyme in the mitochondrial electron transport chain which drives oxidative phosphorylation. The respiratory chain contains 3 multisubunit complexes succinate dehydrogenase (complex II, CII), ubiquinol-cytochrome c oxidoreductase (cytochrome b-c1 complex, complex III, CIII) and cytochrome c oxidase (complex IV, CIV), that cooperate to transfer electrons derived from NADH and succinate to molecular oxygen, creating an electrochemical gradient over the inner membrane that drives transmembrane transport and the ATP synthase. Cytochrome c oxidase is the component of the respiratory chain that catalyzes the reduction of oxygen to water. Electrons originating from reduced cytochrome c in the intermembrane space (IMS) are transferred via the dinuclear copper A center (CU(A)) of subunit 2 and heme A of subunit 1 to the active site in subunit 1, a binuclear center (BNC) formed by heme A3 and copper B (CU(B)). The BNC reduces molecular oxygen to 2 water molecules using 4 electrons from cytochrome c in the IMS and 4 protons from the mitochondrial matrix. This is Cytochrome c oxidase subunit 3 (MT-CO3) from Loxodonta africana (African elephant).